The sequence spans 87 residues: Small ribosomal subunit protein uS17 (87 aa).

This sequence belongs to the universal ribosomal protein uS17 family. Part of the 30S ribosomal subunit.

Functionally, one of the primary rRNA binding proteins, it binds specifically to the 5'-end of 16S ribosomal RNA. This Staphylococcus aureus (strain Mu3 / ATCC 700698) protein is Small ribosomal subunit protein uS17.